A 209-amino-acid polypeptide reads, in one-letter code: Kynurenine formamidase (209 aa).

Trp19 is a substrate binding site. Residues His49, His53, and Asp55 each contribute to the Zn(2+) site. Residue His59 is the Proton donor/acceptor of the active site. Residues His160 and Glu172 each coordinate Zn(2+).

The protein belongs to the Cyclase 1 superfamily. KynB family. As to quaternary structure, homodimer. Zn(2+) serves as cofactor.

It carries out the reaction N-formyl-L-kynurenine + H2O = L-kynurenine + formate + H(+). It participates in amino-acid degradation; L-tryptophan degradation via kynurenine pathway; L-kynurenine from L-tryptophan: step 2/2. Functionally, catalyzes the hydrolysis of N-formyl-L-kynurenine to L-kynurenine, the second step in the kynurenine pathway of tryptophan degradation. The protein is Kynurenine formamidase of Ralstonia nicotianae (strain ATCC BAA-1114 / GMI1000) (Ralstonia solanacearum).